The following is a 72-amino-acid chain: Translation initiation factor IF-1 (72 aa).

The region spanning 1–72 is the S1-like domain; sequence MSKDDVIEID…DKGRITYRYK (72 aa).

The protein belongs to the IF-1 family. Component of the 30S ribosomal translation pre-initiation complex which assembles on the 30S ribosome in the order IF-2 and IF-3, IF-1 and N-formylmethionyl-tRNA(fMet); mRNA recruitment can occur at any time during PIC assembly.

It is found in the cytoplasm. Functionally, one of the essential components for the initiation of protein synthesis. Stabilizes the binding of IF-2 and IF-3 on the 30S subunit to which N-formylmethionyl-tRNA(fMet) subsequently binds. Helps modulate mRNA selection, yielding the 30S pre-initiation complex (PIC). Upon addition of the 50S ribosomal subunit IF-1, IF-2 and IF-3 are released leaving the mature 70S translation initiation complex. In Campylobacter hominis (strain ATCC BAA-381 / DSM 21671 / CCUG 45161 / LMG 19568 / NCTC 13146 / CH001A), this protein is Translation initiation factor IF-1.